A 261-amino-acid polypeptide reads, in one-letter code: Thiazole synthase (261 aa).

K98 serves as the catalytic Schiff-base intermediate with DXP. 1-deoxy-D-xylulose 5-phosphate is bound by residues G159, 185-186 (AG), and 207-208 (AS).

It belongs to the ThiG family. Homotetramer. Forms heterodimers with either ThiH or ThiS.

It is found in the cytoplasm. It carries out the reaction [ThiS sulfur-carrier protein]-C-terminal-Gly-aminoethanethioate + 2-iminoacetate + 1-deoxy-D-xylulose 5-phosphate = [ThiS sulfur-carrier protein]-C-terminal Gly-Gly + 2-[(2R,5Z)-2-carboxy-4-methylthiazol-5(2H)-ylidene]ethyl phosphate + 2 H2O + H(+). It functions in the pathway cofactor biosynthesis; thiamine diphosphate biosynthesis. Functionally, catalyzes the rearrangement of 1-deoxy-D-xylulose 5-phosphate (DXP) to produce the thiazole phosphate moiety of thiamine. Sulfur is provided by the thiocarboxylate moiety of the carrier protein ThiS. In vitro, sulfur can be provided by H(2)S. The polypeptide is Thiazole synthase (Mycobacterium leprae (strain Br4923)).